Here is a 106-residue protein sequence, read N- to C-terminus: UPF0145 protein CPE0882 (106 aa).

Belongs to the UPF0145 family.

The sequence is that of UPF0145 protein CPE0882 from Clostridium perfringens (strain 13 / Type A).